Consider the following 62-residue polypeptide: Large ribosomal subunit protein uL30 (62 aa).

It belongs to the universal ribosomal protein uL30 family. As to quaternary structure, part of the 50S ribosomal subunit.

In Cereibacter sphaeroides (strain ATCC 17029 / ATH 2.4.9) (Rhodobacter sphaeroides), this protein is Large ribosomal subunit protein uL30.